The following is a 440-amino-acid chain: MAAAAAATFLPHTPTPRRRLAVAVHSPTRRRLSLVFSGPPDGALSVAAAEEKADAGEEAAAAVSAPRGGGGGGGKERRRVVRKAWEKLVRWSRSWRRRNRSDVVETTRKVVVLGGGSFGTAMAAQVAAKKADLEVSMLLRDDLVCRSINHSHINCKYLRDHRLPENITATTSASDALAGADFCFHAVPVQFSSSFLEGISTHVDPKLPFISLSKGLELNTLRTMSQIIPQALGNPRQPFIVLSGPSFAIELMNKLPTAMVVASKDKKLAAAVQQLLASPNLRISTSNDVTGVEIAGALKNVLAIAAGIVEGMHLGNNCMAALVAQGCSEIRWLATKMGAKPTTLSGLSGSGDIMLTCFVNLSRNRNVGLRLGSGEKLDEIMNSMNQVAEGVSTAGAVIALAQKYHVKMPVLTAVARIIDNELTPKKAVMELMNLPQVEEV.

Residues 1-47 constitute a chloroplast transit peptide; sequence MAAAAAATFLPHTPTPRRRLAVAVHSPTRRRLSLVFSGPPDGALSVA. Positions 57 to 76 are disordered; it reads EEAAAAVSAPRGGGGGGGKE. NAD(+)-binding positions include 114–119, Phe191, Lys214, and Ala248; that span reads GGGSFG. Residue Lys214 participates in substrate binding. The Proton acceptor role is filled by Lys299. Arg363 and Glu389 together coordinate NAD(+). 363 to 364 provides a ligand contact to substrate; that stretch reads RN.

This sequence belongs to the NAD-dependent glycerol-3-phosphate dehydrogenase family.

The protein resides in the plastid. It is found in the chloroplast. It carries out the reaction sn-glycerol 3-phosphate + NAD(+) = dihydroxyacetone phosphate + NADH + H(+). Its pathway is membrane lipid metabolism; glycerophospholipid metabolism. In terms of biological role, required to supply glycerol-3-phosphate in the chloroplast for the synthesis of glycerolipids. The chain is Glycerol-3-phosphate dehydrogenase [NAD(+)], chloroplastic from Oryza sativa subsp. japonica (Rice).